The following is a 239-amino-acid chain: Uridylate kinase (239 aa).

10–13 (KFSG) is an ATP binding site. Residues 18-23 (GENGFG) are involved in allosteric activation by GTP. Gly-52 provides a ligand contact to UMP. 2 residues coordinate ATP: Gly-53 and Arg-57. Residues Asp-73 and 134–141 (TGNPYFTT) contribute to the UMP site. ATP is bound by residues Thr-161, Tyr-167, and Asp-170.

It belongs to the UMP kinase family. In terms of assembly, homohexamer.

It localises to the cytoplasm. It carries out the reaction UMP + ATP = UDP + ADP. The protein operates within pyrimidine metabolism; CTP biosynthesis via de novo pathway; UDP from UMP (UMPK route): step 1/1. Allosterically activated by GTP. Inhibited by UTP. Catalyzes the reversible phosphorylation of UMP to UDP. In Campylobacter jejuni subsp. jejuni serotype O:6 (strain 81116 / NCTC 11828), this protein is Uridylate kinase.